The following is a 158-amino-acid chain: MQGRLSAWLVKHGLIHRSLGFDYQGIETLQIKPEDWHSIAVIFYVYGYNYLRSQCAYDVAPGGLLASVYHLTRIEDGVDQPEEVCIKVFASRRNPRIPSVFWVWKSVDFQERESYDMLGISYDNHPRLKRILMPESWIGWPLRKDYIAPNFYEIQDAH.

It belongs to the complex I 30 kDa subunit family. As to quaternary structure, NDH is composed of at least 16 different subunits, 5 of which are encoded in the nucleus.

Its subcellular location is the plastid. It is found in the chloroplast thylakoid membrane. The enzyme catalyses a plastoquinone + NADH + (n+1) H(+)(in) = a plastoquinol + NAD(+) + n H(+)(out). It carries out the reaction a plastoquinone + NADPH + (n+1) H(+)(in) = a plastoquinol + NADP(+) + n H(+)(out). NDH shuttles electrons from NAD(P)H:plastoquinone, via FMN and iron-sulfur (Fe-S) centers, to quinones in the photosynthetic chain and possibly in a chloroplast respiratory chain. The immediate electron acceptor for the enzyme in this species is believed to be plastoquinone. Couples the redox reaction to proton translocation, and thus conserves the redox energy in a proton gradient. In Nicotiana tabacum (Common tobacco), this protein is NAD(P)H-quinone oxidoreductase subunit J, chloroplastic.